Reading from the N-terminus, the 271-residue chain is 3-methyl-2-oxobutanoate hydroxymethyltransferase (271 aa).

2 residues coordinate Mg(2+): Asp49 and Asp88. Residues 49 to 50 (DS), Asp88, and Lys118 each bind 3-methyl-2-oxobutanoate. Glu120 is a Mg(2+) binding site. Glu187 serves as the catalytic Proton acceptor.

The protein belongs to the PanB family. As to quaternary structure, homodecamer; pentamer of dimers. Mg(2+) serves as cofactor.

The protein resides in the cytoplasm. It catalyses the reaction 3-methyl-2-oxobutanoate + (6R)-5,10-methylene-5,6,7,8-tetrahydrofolate + H2O = 2-dehydropantoate + (6S)-5,6,7,8-tetrahydrofolate. It participates in cofactor biosynthesis; (R)-pantothenate biosynthesis; (R)-pantoate from 3-methyl-2-oxobutanoate: step 1/2. Its function is as follows. Catalyzes the reversible reaction in which hydroxymethyl group from 5,10-methylenetetrahydrofolate is transferred onto alpha-ketoisovalerate to form ketopantoate. The chain is 3-methyl-2-oxobutanoate hydroxymethyltransferase from Bartonella bacilliformis (strain ATCC 35685 / KC583 / Herrer 020/F12,63).